The following is a 1053-amino-acid chain: Ubiquitin-like modifier-activating enzyme 6 (1053 aa).

Methionine 1 carries the post-translational modification N-acetylmethionine. Arginine 46 contributes to the ATP binding site. At threonine 54 the chain carries Phosphothreonine. Residues alanine 470 and aspartate 497 each coordinate ATP. 2 residues coordinate Mg(2+): aspartate 499 and glutamate 502. Residues asparagine 505, arginine 508, glutamine 509, and lysine 521 each contribute to the ATP site. Position 544 is an N6-acetyllysine (lysine 544). ATP is bound at residue valine 545. Position 569 (aspartate 569) interacts with Mg(2+). Asparagine 570 serves as a coordination point for ATP. Cysteine 625 acts as the Glycyl thioester intermediate in catalysis. Position 729 is an N6-acetyllysine (lysine 729). Position 737 is a phosphoserine (serine 737).

The protein belongs to the ubiquitin-activating E1 family. Forms a thioester with UBD in cells stimulated with tumor necrosis factor-alpha (TNFa) and interferon-gamma (IFNg).

The enzyme catalyses ATP + ubiquitin + [E1 ubiquitin-activating enzyme]-L-cysteine = AMP + diphosphate + S-ubiquitinyl-[E1 ubiquitin-activating enzyme]-L-cysteine.. Its pathway is protein modification; protein ubiquitination. In terms of biological role, activates ubiquitin by first adenylating its C-terminal glycine residue with ATP, and thereafter linking this residue to the side chain of a cysteine residue in E1, yielding a ubiquitin-E1 thioester and free AMP. Specific for ubiquitin, does not activate ubiquitin-like peptides. Also activates UBD/FAT10 conjugation via adenylation of its C-terminal glycine. Differs from UBE1 in its specificity for substrate E2 charging. Does not charge cell cycle E2s, such as CDC34. Essential for embryonic development. This Mus musculus (Mouse) protein is Ubiquitin-like modifier-activating enzyme 6 (Uba6).